Consider the following 641-residue polypeptide: Threonine--tRNA ligase (641 aa).

The TGS domain occupies 1-61 (MIKISFFDNQ…KKNGNLEILT (61 aa)). Residues 240–538 (DHKKINKELD…LVEETKGVFP (299 aa)) are catalytic. Residues Cys334, His385, and His515 each coordinate Zn(2+).

Belongs to the class-II aminoacyl-tRNA synthetase family. In terms of assembly, homodimer. It depends on Zn(2+) as a cofactor.

The protein resides in the cytoplasm. It catalyses the reaction tRNA(Thr) + L-threonine + ATP = L-threonyl-tRNA(Thr) + AMP + diphosphate + H(+). Catalyzes the attachment of threonine to tRNA(Thr) in a two-step reaction: L-threonine is first activated by ATP to form Thr-AMP and then transferred to the acceptor end of tRNA(Thr). Also edits incorrectly charged L-seryl-tRNA(Thr). This Aster yellows witches'-broom phytoplasma (strain AYWB) protein is Threonine--tRNA ligase.